Reading from the N-terminus, the 278-residue chain is Probable 3-hydroxybutyryl-CoA dehydrogenase (278 aa).

It belongs to the 3-hydroxyacyl-CoA dehydrogenase family.

The catalysed reaction is (3S)-3-hydroxybutanoyl-CoA + NADP(+) = acetoacetyl-CoA + NADPH + H(+). The protein operates within lipid metabolism; butanoate metabolism. The protein is Probable 3-hydroxybutyryl-CoA dehydrogenase (hbd) of Deinococcus radiodurans (strain ATCC 13939 / DSM 20539 / JCM 16871 / CCUG 27074 / LMG 4051 / NBRC 15346 / NCIMB 9279 / VKM B-1422 / R1).